A 559-amino-acid polypeptide reads, in one-letter code: MSIDEAKEGGGGPAMSPRAFALAHQRDRGSFVGCSRIADYEVLGKLGEGTFGEVHRARSRKTGALVALKKIIMHNERDGFPITALREIKLLKLLSHKNVLRLEEMAIEHPPRTDKRTRPIVYMVTPYMDHDLSGLLDNPSVRFTEPQVKCYLLQLLEGLKYLHANHILHRDMKAANLLINNKGVLQIADFGLARHYEGDIPQPGKGSGEGKRDYTSLVVTRWYRPPELLMHLKRYTTAIDMWGVGCVFAEMLEGKPVLQGESDLHQLELVWDLCGTPSEETMPGWRTLPGGQAFSSKPRPGNLARRFEKHGPVVISLLKELFKLDWRSRINAIDALNHPYFRTAPLPALPGDLPTFEESHEFDRRKFQDRKAALPPAPKGGTVGRGAVVNSQGPDTGFSGRDGYGGGGRNGANGGRYPPYHRGPPPGDERVPSWHSARGLPPRPPMPADYHGSGPMDHTDGYRDRPPRRGPGGPPGGGGGPSNVDTYIPSYDRDGPAPRREDWRRRDDWDDRRGGVDRDRRRPEYDVRSRDSRTRSRTRSRSPVRDRDRGRDRDAYARR.

Residues 40-341 (YEVLGKLGEG…AIDALNHPYF (302 aa)) form the Protein kinase domain. Residues 46-54 (LGEGTFGEV) and Lys-69 each bind ATP. Asp-171 functions as the Proton acceptor in the catalytic mechanism. The span at 359–372 (SHEFDRRKFQDRKA) shows a compositional bias: basic and acidic residues. Residues 359–559 (SHEFDRRKFQ…GRDRDAYARR (201 aa)) form a disordered region. A compositionally biased stretch (gly residues) spans 400 to 414 (GRDGYGGGGRNGANG). 3 stretches are compositionally biased toward basic and acidic residues: residues 457-467 (DHTDGYRDRPP), 491-534 (YDRD…DSRT), and 543-559 (PVRD…YARR).

Belongs to the protein kinase superfamily. CMGC Ser/Thr protein kinase family. CDC2/CDKX subfamily.

Its subcellular location is the nucleus. It carries out the reaction L-seryl-[protein] + ATP = O-phospho-L-seryl-[protein] + ADP + H(+). It catalyses the reaction L-threonyl-[protein] + ATP = O-phospho-L-threonyl-[protein] + ADP + H(+). The catalysed reaction is [DNA-directed RNA polymerase] + ATP = phospho-[DNA-directed RNA polymerase] + ADP + H(+). Its function is as follows. Serine/threonine-protein kinase involved in transcription regulation. Phosphorylates the mus-8/ubc2 ubiquitin-conjugating enzyme (E2), leading to monoubiquitination of histone H2B and the silencing of telomeric-associated genes. Also required for histone H3 methylation. Necessary for the recovery from pheromone-induced growth arrest in the cell cycle G1 phase. This is Serine/threonine-protein kinase bur1 (stk-1) from Neurospora crassa (strain ATCC 24698 / 74-OR23-1A / CBS 708.71 / DSM 1257 / FGSC 987).